A 255-amino-acid chain; its full sequence is uncharacterized protein (255 aa).

It belongs to the methyltransferase superfamily.

This is an uncharacterized protein from Bacillus subtilis (strain 168).